The sequence spans 212 residues: Stem bromelain (212 aa).

Cystine bridges form between C23-C63 and C57-C96. Residue C26 is part of the active site. A glycan (N-linked (GlcNAc...) asparagine) is linked at N117. C152 and C199 form a disulfide bridge. H158 is an active-site residue.

Belongs to the peptidase C1 family.

The catalysed reaction is Broad specificity for cleavage of proteins, but strong preference for Z-Arg-Arg-|-NHMec among small molecule substrates.. Its function is as follows. Cysteine proteinase with a high level of diversity in substrate specificity. The chain is Stem bromelain from Ananas comosus (Pineapple).